The primary structure comprises 210 residues: Ion-translocating oxidoreductase complex subunit G (210 aa).

A helical membrane pass occupies residues Ser-9–Leu-29. Thr-176 is subject to FMN phosphoryl threonine.

Belongs to the RnfG family. The complex is composed of six subunits: RnfA, RnfB, RnfC, RnfD, RnfE and RnfG. It depends on FMN as a cofactor.

It localises to the cell inner membrane. Its function is as follows. Part of a membrane-bound complex that couples electron transfer with translocation of ions across the membrane. This Aliivibrio fischeri (strain ATCC 700601 / ES114) (Vibrio fischeri) protein is Ion-translocating oxidoreductase complex subunit G.